Consider the following 184-residue polypeptide: ATP synthase subunit b (184 aa).

The helical transmembrane segment at 24–44 threads the bilayer; it reads ILVVVVGFALLMFIVIKFIVP.

It belongs to the ATPase B chain family. In terms of assembly, F-type ATPases have 2 components, F(1) - the catalytic core - and F(0) - the membrane proton channel. F(1) has five subunits: alpha(3), beta(3), gamma(1), delta(1), epsilon(1). F(0) has three main subunits: a(1), b(2) and c(10-14). The alpha and beta chains form an alternating ring which encloses part of the gamma chain. F(1) is attached to F(0) by a central stalk formed by the gamma and epsilon chains, while a peripheral stalk is formed by the delta and b chains.

Its subcellular location is the cell membrane. F(1)F(0) ATP synthase produces ATP from ADP in the presence of a proton or sodium gradient. F-type ATPases consist of two structural domains, F(1) containing the extramembraneous catalytic core and F(0) containing the membrane proton channel, linked together by a central stalk and a peripheral stalk. During catalysis, ATP synthesis in the catalytic domain of F(1) is coupled via a rotary mechanism of the central stalk subunits to proton translocation. Its function is as follows. Component of the F(0) channel, it forms part of the peripheral stalk, linking F(1) to F(0). This Micrococcus luteus (strain ATCC 4698 / DSM 20030 / JCM 1464 / CCM 169 / CCUG 5858 / IAM 1056 / NBRC 3333 / NCIMB 9278 / NCTC 2665 / VKM Ac-2230) (Micrococcus lysodeikticus) protein is ATP synthase subunit b (atpF).